Reading from the N-terminus, the 188-residue chain is Phosphoribosylglycinamide formyltransferase (188 aa).

12-14 (GSN) contributes to the N(1)-(5-phospho-beta-D-ribosyl)glycinamide binding site. (6R)-10-formyltetrahydrofolate contacts are provided by residues lysine 66, 91 to 94 (MRLI), and asparagine 108. Residue histidine 110 is the Proton donor of the active site.

Belongs to the GART family.

The enzyme catalyses N(1)-(5-phospho-beta-D-ribosyl)glycinamide + (6R)-10-formyltetrahydrofolate = N(2)-formyl-N(1)-(5-phospho-beta-D-ribosyl)glycinamide + (6S)-5,6,7,8-tetrahydrofolate + H(+). The protein operates within purine metabolism; IMP biosynthesis via de novo pathway; N(2)-formyl-N(1)-(5-phospho-D-ribosyl)glycinamide from N(1)-(5-phospho-D-ribosyl)glycinamide (10-formyl THF route): step 1/1. In terms of biological role, catalyzes the transfer of a formyl group from 10-formyltetrahydrofolate to 5-phospho-ribosyl-glycinamide (GAR), producing 5-phospho-ribosyl-N-formylglycinamide (FGAR) and tetrahydrofolate. The polypeptide is Phosphoribosylglycinamide formyltransferase (Staphylococcus aureus (strain Mu50 / ATCC 700699)).